A 159-amino-acid chain; its full sequence is Phosphopantetheine adenylyltransferase (159 aa).

Thr10 is a binding site for substrate. Residues 10 to 11 (TF) and His18 each bind ATP. Lys42, Met74, and Arg88 together coordinate substrate. Residues 89-91 (GLR), Glu99, and 124-130 (WSFISSS) each bind ATP.

It belongs to the bacterial CoaD family. Homohexamer. Requires Mg(2+) as cofactor.

The protein resides in the cytoplasm. The enzyme catalyses (R)-4'-phosphopantetheine + ATP + H(+) = 3'-dephospho-CoA + diphosphate. The protein operates within cofactor biosynthesis; coenzyme A biosynthesis; CoA from (R)-pantothenate: step 4/5. Its function is as follows. Reversibly transfers an adenylyl group from ATP to 4'-phosphopantetheine, yielding dephospho-CoA (dPCoA) and pyrophosphate. This is Phosphopantetheine adenylyltransferase from Shigella sonnei (strain Ss046).